Consider the following 415-residue polypeptide: 3-oxoacyl-[acyl-carrier-protein] synthase 2 (415 aa).

In terms of domain architecture, Ketosynthase family 3 (KS3) spans 3-412; that stretch reads KRRVVVTGMG…GTNGSLVFKK (410 aa). Active-site for beta-ketoacyl synthase activity residues include C164, H304, and H342.

It belongs to the thiolase-like superfamily. Beta-ketoacyl-ACP synthases family. Homodimer.

The catalysed reaction is a fatty acyl-[ACP] + malonyl-[ACP] + H(+) = a 3-oxoacyl-[ACP] + holo-[ACP] + CO2. It carries out the reaction (9Z)-hexadecenoyl-[ACP] + malonyl-[ACP] + H(+) = 3-oxo-(11Z)-octadecenoyl-[ACP] + holo-[ACP] + CO2. Its pathway is lipid metabolism; fatty acid biosynthesis. Functionally, involved in the type II fatty acid elongation cycle. Catalyzes the elongation of a wide range of acyl-ACP by the addition of two carbons from malonyl-ACP to an acyl acceptor. Can efficiently catalyze the conversion of palmitoleoyl-ACP (cis-hexadec-9-enoyl-ACP) to cis-vaccenoyl-ACP (cis-octadec-11-enoyl-ACP), an essential step in the thermal regulation of fatty acid composition. In Vibrio harveyi (Beneckea harveyi), this protein is 3-oxoacyl-[acyl-carrier-protein] synthase 2 (fabF).